Here is a 1109-residue protein sequence, read N- to C-terminus: Carbamoyl phosphate synthase large chain (1109 aa).

The interval 1-402 (MPKRTDLKSV…ALQKALRSLE (402 aa)) is carboxyphosphate synthetic domain. 12 residues coordinate ATP: arginine 129, arginine 169, glycine 175, glycine 176, glutamate 208, isoleucine 210, glutamate 215, glycine 241, valine 242, histidine 243, glutamine 285, and glutamate 299. An ATP-grasp 1 domain is found at 133-328 (KGVVERCGAE…IAKIATKLSL (196 aa)). Glutamine 285, glutamate 299, and asparagine 301 together coordinate Mg(2+). Mn(2+)-binding residues include glutamine 285, glutamate 299, and asparagine 301. Positions 403–546 (QKGSQLDFSS…YHYSAYDEED (144 aa)) are oligomerization domain. A carbamoyl phosphate synthetic domain region spans residues 547–950 (EVALHSKPSI…AFAKSQAGAN (404 aa)). One can recognise an ATP-grasp 2 domain in the interval 677–868 (SRVLDKAGLV…MAKAAALIGT (192 aa)). ATP contacts are provided by arginine 713, arginine 752, leucine 754, glutamate 759, glycine 784, isoleucine 785, histidine 786, serine 787, glutamine 827, and glutamate 839. Mg(2+)-binding residues include glutamine 827, glutamate 839, and asparagine 841. Mn(2+) is bound by residues glutamine 827, glutamate 839, and asparagine 841. An MGS-like domain is found at 951–1096 (NALPTEGKVF…QEHAAALGES (146 aa)). The allosteric domain stretch occupies residues 951–1109 (NALPTEGKVF…AAAKADLQHA (159 aa)).

The protein belongs to the CarB family. Composed of two chains; the small (or glutamine) chain promotes the hydrolysis of glutamine to ammonia, which is used by the large (or ammonia) chain to synthesize carbamoyl phosphate. Tetramer of heterodimers (alpha,beta)4. It depends on Mg(2+) as a cofactor. Requires Mn(2+) as cofactor.

It carries out the reaction hydrogencarbonate + L-glutamine + 2 ATP + H2O = carbamoyl phosphate + L-glutamate + 2 ADP + phosphate + 2 H(+). The enzyme catalyses hydrogencarbonate + NH4(+) + 2 ATP = carbamoyl phosphate + 2 ADP + phosphate + 2 H(+). Its pathway is amino-acid biosynthesis; L-arginine biosynthesis; carbamoyl phosphate from bicarbonate: step 1/1. It functions in the pathway pyrimidine metabolism; UMP biosynthesis via de novo pathway; (S)-dihydroorotate from bicarbonate: step 1/3. Functionally, large subunit of the glutamine-dependent carbamoyl phosphate synthetase (CPSase). CPSase catalyzes the formation of carbamoyl phosphate from the ammonia moiety of glutamine, carbonate, and phosphate donated by ATP, constituting the first step of 2 biosynthetic pathways, one leading to arginine and/or urea and the other to pyrimidine nucleotides. The large subunit (synthetase) binds the substrates ammonia (free or transferred from glutamine from the small subunit), hydrogencarbonate and ATP and carries out an ATP-coupled ligase reaction, activating hydrogencarbonate by forming carboxy phosphate which reacts with ammonia to form carbamoyl phosphate. This Pseudarthrobacter chlorophenolicus (strain ATCC 700700 / DSM 12829 / CIP 107037 / JCM 12360 / KCTC 9906 / NCIMB 13794 / A6) (Arthrobacter chlorophenolicus) protein is Carbamoyl phosphate synthase large chain.